Consider the following 68-residue polypeptide: DNA-directed RNA polymerase subunit Rpo10 (68 aa).

The Zn(2+) site is built by cysteine 7, cysteine 10, cysteine 44, and cysteine 45.

The protein belongs to the archaeal Rpo10/eukaryotic RPB10 RNA polymerase subunit family. Part of the RNA polymerase complex. It depends on Zn(2+) as a cofactor.

Its subcellular location is the cytoplasm. It carries out the reaction RNA(n) + a ribonucleoside 5'-triphosphate = RNA(n+1) + diphosphate. Functionally, DNA-dependent RNA polymerase (RNAP) catalyzes the transcription of DNA into RNA using the four ribonucleoside triphosphates as substrates. This is DNA-directed RNA polymerase subunit Rpo10 from Methanococcus vannielii (strain ATCC 35089 / DSM 1224 / JCM 13029 / OCM 148 / SB).